Consider the following 254-residue polypeptide: Phosphatidylglycerophosphatase B (254 aa).

Residues 2 to 24 (RSIARRTAVGAALLLVMPVAVWI) traverse the membrane as a helical segment. Over 25 to 54 (SGWRWQPGEQSWLLKAAFWVTETVTQPWGV) the chain is Periplasmic. The chain crosses the membrane as a helical span at residues 55–66 (ITHLILFGWFLW). The Cytoplasmic portion of the chain corresponds to 67–71 (CLRFR). A helical membrane pass occupies residues 72 to 94 (IKAAFVLFAILAAAILVGQGVKS). The Periplasmic portion of the chain corresponds to 95 to 161 (WIKDKVQEPR…QKETGFAFPS (67 aa)). Residues 97 to 105 (KDKVQEPRP) form a phosphatase sequence motif I region. The tract at residues 160-163 (PSGH) is phosphatase sequence motif II. Residues 162-176 (GHTMFAASWALLAVG) traverse the membrane as a helical segment. His163 (proton donor; for a subset of substrates) is an active-site residue. Topologically, residues 177 to 182 (LLWPRR) are cytoplasmic. A helical membrane pass occupies residues 183–202 (RTLTIAILLVWATGVMGSRL). Residues 200 to 211 (SRLLLGMHWPRD) are phosphatase sequence motif III. At 203–208 (LLGMHW) the chain is on the periplasmic side. Catalysis depends on His207, which acts as the Nucleophile. The helical transmembrane segment at 209–232 (PRDLVVATLISWALVAVATWLAQR) threads the bilayer. At 233–254 (ICGPLTPPAEENREIAQREQES) the chain is on the cytoplasmic side.

Belongs to the PA-phosphatase related phosphoesterase family. The N-terminus is blocked.

Its subcellular location is the cell inner membrane. It is found in the cell outer membrane. The enzyme catalyses a 1,2-diacyl-sn-glycero-3-phospho-(1'-sn-glycero-3'-phosphate) + H2O = a 1,2-diacyl-sn-glycero-3-phospho-(1'-sn-glycerol) + phosphate. The catalysed reaction is a 1,2-diacyl-sn-glycerol 3-diphosphate + H2O = a 1,2-diacyl-sn-glycero-3-phosphate + phosphate + H(+). It carries out the reaction a 1,2-diacyl-sn-glycero-3-phosphate + H2O = a 1,2-diacyl-sn-glycerol + phosphate. It catalyses the reaction di-trans,octa-cis-undecaprenyl diphosphate + H2O = di-trans,octa-cis-undecaprenyl phosphate + phosphate + H(+). It participates in phospholipid metabolism; phosphatidylglycerol biosynthesis; phosphatidylglycerol from CDP-diacylglycerol: step 2/2. Its function is as follows. Catalyzes the dephosphorylation of diacylglycerol diphosphate (DGPP) to phosphatidate (PA) and the subsequent dephosphorylation of PA to diacylglycerol (DAG). Also has undecaprenyl pyrophosphate phosphatase activity, required for the biosynthesis of the lipid carrier undecaprenyl phosphate. Can also use lysophosphatidic acid (LPA) and phosphatidylglycerophosphate as substrates. The pattern of activities varies according to subcellular location, PGP phosphatase activity is higher in the cytoplasmic membrane, whereas PA and LPA phosphatase activities are higher in the outer membrane. Activity is independent of a divalent cation ion and insensitive to inhibition by N-ethylmaleimide. This is Phosphatidylglycerophosphatase B (pgpB) from Escherichia coli O157:H7.